We begin with the raw amino-acid sequence, 196 residues long: ATP-dependent Clp protease proteolytic subunit (196 aa).

Catalysis depends on S96, which acts as the Nucleophile. H121 is a catalytic residue.

Belongs to the peptidase S14 family. As to quaternary structure, fourteen ClpP subunits assemble into 2 heptameric rings which stack back to back to give a disk-like structure with a central cavity, resembling the structure of eukaryotic proteasomes.

It localises to the cytoplasm. It catalyses the reaction Hydrolysis of proteins to small peptides in the presence of ATP and magnesium. alpha-casein is the usual test substrate. In the absence of ATP, only oligopeptides shorter than five residues are hydrolyzed (such as succinyl-Leu-Tyr-|-NHMec, and Leu-Tyr-Leu-|-Tyr-Trp, in which cleavage of the -Tyr-|-Leu- and -Tyr-|-Trp bonds also occurs).. Its function is as follows. Cleaves peptides in various proteins in a process that requires ATP hydrolysis. Has a chymotrypsin-like activity. Plays a major role in the degradation of misfolded proteins. This is ATP-dependent Clp protease proteolytic subunit from Streptococcus salivarius.